Consider the following 533-residue polypeptide: Lanosterol 14-alpha demethylase (533 aa).

C472 lines the heme pocket.

This sequence belongs to the cytochrome P450 family. The cofactor is heme.

The protein resides in the membrane. The enzyme catalyses a 14alpha-methyl steroid + 3 reduced [NADPH--hemoprotein reductase] + 3 O2 = a Delta(14) steroid + formate + 3 oxidized [NADPH--hemoprotein reductase] + 4 H2O + 4 H(+). It carries out the reaction a 14alpha-methyl steroid + reduced [NADPH--hemoprotein reductase] + O2 = a 14alpha-hydroxymethyl steroid + oxidized [NADPH--hemoprotein reductase] + H2O + H(+). The catalysed reaction is a 14alpha-hydroxymethyl steroid + reduced [NADPH--hemoprotein reductase] + O2 = a 14alpha-formyl steroid + oxidized [NADPH--hemoprotein reductase] + 2 H2O + H(+). It catalyses the reaction a 14alpha-formyl steroid + reduced [NADPH--hemoprotein reductase] + O2 = a Delta(14) steroid + formate + oxidized [NADPH--hemoprotein reductase] + H2O + 2 H(+). The enzyme catalyses lanosterol + 3 reduced [NADPH--hemoprotein reductase] + 3 O2 = 4,4-dimethyl-5alpha-cholesta-8,14,24-trien-3beta-ol + formate + 3 oxidized [NADPH--hemoprotein reductase] + 4 H2O + 4 H(+). It carries out the reaction lanosterol + reduced [NADPH--hemoprotein reductase] + O2 = 32-hydroxylanosterol + oxidized [NADPH--hemoprotein reductase] + H2O + H(+). The catalysed reaction is 32-hydroxylanosterol + reduced [NADPH--hemoprotein reductase] + O2 = 32-oxolanosterol + oxidized [NADPH--hemoprotein reductase] + 2 H2O + H(+). It catalyses the reaction 32-oxolanosterol + reduced [NADPH--hemoprotein reductase] + O2 = 4,4-dimethyl-5alpha-cholesta-8,14,24-trien-3beta-ol + formate + oxidized [NADPH--hemoprotein reductase] + H2O + 2 H(+). The enzyme catalyses eburicol + 3 reduced [NADPH--hemoprotein reductase] + 3 O2 = 14-demethyleburicol + formate + 3 oxidized [NADPH--hemoprotein reductase] + 4 H2O + 4 H(+). It carries out the reaction eburicol + reduced [NADPH--hemoprotein reductase] + O2 = 32-hydroxyeburicol + oxidized [NADPH--hemoprotein reductase] + H2O + H(+). The catalysed reaction is 32-hydroxyeburicol + reduced [NADPH--hemoprotein reductase] + O2 = 32-oxoeburicol + oxidized [NADPH--hemoprotein reductase] + 2 H2O + H(+). It catalyses the reaction 32-oxoeburicol + reduced [NADPH--hemoprotein reductase] + O2 = 14-demethyleburicol + formate + oxidized [NADPH--hemoprotein reductase] + H2O + 2 H(+). Its pathway is steroid biosynthesis; zymosterol biosynthesis; zymosterol from lanosterol: step 1/6. Functionally, sterol 14alpha-demethylase that plays a critical role in the third module of ergosterol biosynthesis pathway, being ergosterol the major sterol component in fungal membranes that participates in a variety of functions. The third module or late pathway involves the ergosterol synthesis itself through consecutive reactions that mainly occur in the endoplasmic reticulum (ER) membrane. In filamentous fungi, during the initial step of this module, lanosterol (lanosta-8,24-dien-3beta-ol) can be metabolized to eburicol. Sterol 14alpha-demethylase catalyzes the three-step oxidative removal of the 14alpha-methyl group (C-32) of both these sterols in the form of formate, and converts eburicol and lanosterol to 14-demethyleburicol (4,4,24-trimethylergosta-8,14,24(28)-trienol) and 4,4-dimethyl-5alpha-cholesta-8,14,24-trien-3beta-ol, respectively, which are further metabolized by other enzymes in the pathway to ergosterol. Can also use substrates not intrinsic to fungi, such as 24,25-dihydrolanosterol (DHL), producing 4,4-dimethyl-8,14-cholestadien-3-beta-ol, but at lower rates than the endogenous substrates. This Candida glabrata (strain ATCC 2001 / BCRC 20586 / JCM 3761 / NBRC 0622 / NRRL Y-65 / CBS 138) (Yeast) protein is Lanosterol 14-alpha demethylase (ERG11).